The chain runs to 527 residues: Glutamate--cysteine ligase (527 aa).

This sequence belongs to the glutamate--cysteine ligase type 1 family. Type 1 subfamily.

The enzyme catalyses L-cysteine + L-glutamate + ATP = gamma-L-glutamyl-L-cysteine + ADP + phosphate + H(+). It functions in the pathway sulfur metabolism; glutathione biosynthesis; glutathione from L-cysteine and L-glutamate: step 1/2. The sequence is that of Glutamate--cysteine ligase from Pseudomonas aeruginosa (strain UCBPP-PA14).